The chain runs to 184 residues: NEDD8-conjugating enzyme Ubc12 (184 aa).

In terms of domain architecture, UBC core spans 30–175 (AGELRLHKDI…VRRAMTGGYV (146 aa)). Cys-113 acts as the Glycyl thioester intermediate in catalysis.

Belongs to the ubiquitin-conjugating enzyme family. UBC12 subfamily. As to quaternary structure, interacts with RBX1. Expressed in shoot, root and floral meristems, and in vascular tissues of leaves.

Its pathway is protein modification; protein neddylation. Functionally, accepts the ubiquitin-like protein NEDD8/RUB1 from the ECR1-AXR1 E1 complex and catalyzes its covalent attachment to other proteins. The chain is NEDD8-conjugating enzyme Ubc12 (RCE1) from Arabidopsis thaliana (Mouse-ear cress).